A 277-amino-acid chain; its full sequence is Alpha carbonic anhydrase 5 (277 aa).

An N-terminal signal peptide occupies residues methionine 1–serine 22. The 237-residue stretch at threonine 33–isoleucine 269 folds into the Alpha-carbonic anhydrase domain. Cysteines 58 and 219 form a disulfide. N-linked (GlcNAc...) asparagine glycosylation occurs at asparagine 91. Residue histidine 99 is the Proton acceptor of the active site. An N-linked (GlcNAc...) asparagine glycan is attached at asparagine 117. Residues histidine 127, histidine 129, and histidine 146 each coordinate Zn(2+). Threonine 215–threonine 216 provides a ligand contact to substrate.

It belongs to the alpha-class carbonic anhydrase family. Zn(2+) is required as a cofactor. Post-translationally, N-glycosylated.

It localises to the plastid. Its subcellular location is the chloroplast stroma. The catalysed reaction is hydrogencarbonate + H(+) = CO2 + H2O. Its function is as follows. Reversible hydration of carbon dioxide. The polypeptide is Alpha carbonic anhydrase 5 (ACA5) (Arabidopsis thaliana (Mouse-ear cress)).